Consider the following 49-residue polypeptide: Large ribosomal subunit protein bL33 (49 aa).

Belongs to the bacterial ribosomal protein bL33 family.

The chain is Large ribosomal subunit protein bL33 from Clostridium botulinum (strain ATCC 19397 / Type A).